Reading from the N-terminus, the 647-residue chain is Bifunctional enzyme CysN/CysC (647 aa).

The segment at 1-472 is sulfate adenylyltransferase; sequence MSHQSDLIAT…TEERAARFGQ (472 aa). The tr-type G domain maps to 22–239; that stretch reads KQLLRFITCG…LETVYIGSDR (218 aa). The segment at 31–38 is G1; that stretch reads GSVDDGKS. Position 31 to 38 (31 to 38) interacts with GTP; it reads GSVDDGKS. A G2 region spans residues 89–93; that stretch reads GITID. The interval 110–113 is G3; that stretch reads DTPG. GTP contacts are provided by residues 110-114 and 165-168; these read DTPGH and NKMD. The tract at residues 165–168 is G4; sequence NKMD. The G5 stretch occupies residues 204–206; that stretch reads SAL. Residues 473–614 are adenylyl-sulfate kinase; that stretch reads KPATVLLTGL…FPGVTAKYDV (142 aa). An ATP-binding site is contributed by 481–488; it reads GLTGSGKT.

The protein in the C-terminal section; belongs to the APS kinase family. In the N-terminal section; belongs to the TRAFAC class translation factor GTPase superfamily. Classic translation factor GTPase family. CysN/NodQ subfamily. In terms of assembly, heterodimer composed of CysD, the smaller subunit, and CysNC.

The enzyme catalyses sulfate + ATP + H(+) = adenosine 5'-phosphosulfate + diphosphate. It carries out the reaction adenosine 5'-phosphosulfate + ATP = 3'-phosphoadenylyl sulfate + ADP + H(+). It functions in the pathway sulfur metabolism; hydrogen sulfide biosynthesis; sulfite from sulfate: step 1/3. The protein operates within sulfur metabolism; hydrogen sulfide biosynthesis; sulfite from sulfate: step 2/3. Functionally, with CysD forms the ATP sulfurylase (ATPS) that catalyzes the adenylation of sulfate producing adenosine 5'-phosphosulfate (APS) and diphosphate, the first enzymatic step in sulfur assimilation pathway. APS synthesis involves the formation of a high-energy phosphoric-sulfuric acid anhydride bond driven by GTP hydrolysis by CysN coupled to ATP hydrolysis by CysD. APS kinase catalyzes the synthesis of activated sulfate. This is Bifunctional enzyme CysN/CysC (cysNC) from Rhodopirellula baltica (strain DSM 10527 / NCIMB 13988 / SH1).